A 114-amino-acid polypeptide reads, in one-letter code: Large ribosomal subunit protein uL22 (114 aa).

Belongs to the universal ribosomal protein uL22 family. As to quaternary structure, part of the 50S ribosomal subunit.

In terms of biological role, this protein binds specifically to 23S rRNA; its binding is stimulated by other ribosomal proteins, e.g. L4, L17, and L20. It is important during the early stages of 50S assembly. It makes multiple contacts with different domains of the 23S rRNA in the assembled 50S subunit and ribosome. The globular domain of the protein is located near the polypeptide exit tunnel on the outside of the subunit, while an extended beta-hairpin is found that lines the wall of the exit tunnel in the center of the 70S ribosome. The polypeptide is Large ribosomal subunit protein uL22 (Streptococcus suis (strain 98HAH33)).